Here is a 176-residue protein sequence, read N- to C-terminus: MKDLVAKRYVKALIDGRNSESINTISNKLNQVASAFADERFNSIISSPEISDKSKVDLIISFVDGTDNSLNNFIKLLGEKRRLDLLPFIAKDLNIQLAKMNNNYIGVVYTNQELSSDYISSIEKQFSKKFDVKLSLSQNVCDYDGIKVDIDGLGVEISFSKDRLKSQLIDHILKAV.

The protein belongs to the ATPase delta chain family. As to quaternary structure, F-type ATPases have 2 components, F(1) - the catalytic core - and F(0) - the membrane proton channel. F(1) has five subunits: alpha(3), beta(3), gamma(1), delta(1), epsilon(1). F(0) has three main subunits: a(1), b(2) and c(10-14). The alpha and beta chains form an alternating ring which encloses part of the gamma chain. F(1) is attached to F(0) by a central stalk formed by the gamma and epsilon chains, while a peripheral stalk is formed by the delta and b chains.

It is found in the cell inner membrane. In terms of biological role, f(1)F(0) ATP synthase produces ATP from ADP in the presence of a proton or sodium gradient. F-type ATPases consist of two structural domains, F(1) containing the extramembraneous catalytic core and F(0) containing the membrane proton channel, linked together by a central stalk and a peripheral stalk. During catalysis, ATP synthesis in the catalytic domain of F(1) is coupled via a rotary mechanism of the central stalk subunits to proton translocation. Functionally, this protein is part of the stalk that links CF(0) to CF(1). It either transmits conformational changes from CF(0) to CF(1) or is implicated in proton conduction. This chain is ATP synthase subunit delta, found in Aliarcobacter butzleri (strain RM4018) (Arcobacter butzleri).